A 171-amino-acid chain; its full sequence is Zinc finger A20 and AN1 domain-containing stress-associated protein 8 (171 aa).

An A20-type zinc finger spans residues 11–45 (PEGPILCINNCGFFGSAATMNMCSKCHKEMIMKQE). Residues C17, C21, C33, C36, C112, C115, C126, C128, C133, H136, H142, and C144 each contribute to the Zn(2+) site. Residues 106–152 (REGPNRCSTCRKRVGLTGFNCRCGNLYCAMHRYSDKHDCQFDYRTAA) form an AN1-type zinc finger.

May be involved in environmental stress response. The chain is Zinc finger A20 and AN1 domain-containing stress-associated protein 8 (SAP8) from Oryza sativa subsp. indica (Rice).